Reading from the N-terminus, the 758-residue chain is Protein SPT21 (758 aa).

4 disordered regions span residues N251 to A271, I372 to R414, G438 to S471, and V624 to N651. Low complexity predominate over residues V395 to S408. S454 is subject to Phosphoserine. Polar residues predominate over residues D626–N651.

Required for normal transcription at a number of loci in yeast. This is Protein SPT21 (SPT21) from Saccharomyces cerevisiae (strain ATCC 204508 / S288c) (Baker's yeast).